We begin with the raw amino-acid sequence, 346 residues long: Phosphoribosylformylglycinamidine cyclo-ligase (346 aa).

The protein belongs to the AIR synthase family.

It localises to the cytoplasm. It catalyses the reaction 2-formamido-N(1)-(5-O-phospho-beta-D-ribosyl)acetamidine + ATP = 5-amino-1-(5-phospho-beta-D-ribosyl)imidazole + ADP + phosphate + H(+). Its pathway is purine metabolism; IMP biosynthesis via de novo pathway; 5-amino-1-(5-phospho-D-ribosyl)imidazole from N(2)-formyl-N(1)-(5-phospho-D-ribosyl)glycinamide: step 2/2. This Geobacillus kaustophilus (strain HTA426) protein is Phosphoribosylformylglycinamidine cyclo-ligase.